The following is an 84-amino-acid chain: Beta-defensin 119 (84 aa).

A signal peptide spans 1 to 21 (MKFLFLFLAILLATEVPVISG). Intrachain disulfides connect Cys28/Cys55, Cys35/Cys49, and Cys39/Cys56.

This sequence belongs to the beta-defensin family. Abundant expression in the male reproductive tract only. Expressed abundantly in testis, while expression in epididymis decreased gradually from caput to cauda.

It is found in the secreted. Has antibacterial activity. The protein is Beta-defensin 119 (DEFB119) of Macaca mulatta (Rhesus macaque).